The sequence spans 258 residues: MIMLNIGPFSFHSRLLLGTGKFPDFDVQQKAIDVSEAEVLTFAVRRMDIFDAKQPNLLEKLDVKKYKLLPNTAGAKNAEEAVRIAKLAKASGLCDMIKVEVIGDDRTLLPDPVETLKASEMLLEEGFIVLPYTSDDVVLARKLQELGVHAIMPGASPIGSGLGIVNPLNLSFIIEQATVPVIVDAGIGSPADAAFAMELGADGVLLNTAVSGAKDPIKMAQAMKLSIEAGRLGFEAGRIARKRCATASSPLEGMSVVE.

Lys98 acts as the Schiff-base intermediate with DXP in catalysis. Residues Gly159, 185-186 (AG), and 207-208 (NT) each bind 1-deoxy-D-xylulose 5-phosphate.

The protein belongs to the ThiG family. Homotetramer. Forms heterodimers with either ThiH or ThiS.

Its subcellular location is the cytoplasm. It catalyses the reaction [ThiS sulfur-carrier protein]-C-terminal-Gly-aminoethanethioate + 2-iminoacetate + 1-deoxy-D-xylulose 5-phosphate = [ThiS sulfur-carrier protein]-C-terminal Gly-Gly + 2-[(2R,5Z)-2-carboxy-4-methylthiazol-5(2H)-ylidene]ethyl phosphate + 2 H2O + H(+). It participates in cofactor biosynthesis; thiamine diphosphate biosynthesis. Its function is as follows. Catalyzes the rearrangement of 1-deoxy-D-xylulose 5-phosphate (DXP) to produce the thiazole phosphate moiety of thiamine. Sulfur is provided by the thiocarboxylate moiety of the carrier protein ThiS. In vitro, sulfur can be provided by H(2)S. This is Thiazole synthase from Bacillus cereus (strain ZK / E33L).